Consider the following 566-residue polypeptide: Glutamate--tRNA ligase (566 aa).

Residues 104 to 114 (PNPDGPLHLGN) carry the 'HIGH' region motif.

It belongs to the class-I aminoacyl-tRNA synthetase family. Glutamate--tRNA ligase type 2 subfamily.

The protein localises to the cytoplasm. The enzyme catalyses tRNA(Glu) + L-glutamate + ATP = L-glutamyl-tRNA(Glu) + AMP + diphosphate. Functionally, catalyzes the attachment of glutamate to tRNA(Glu) in a two-step reaction: glutamate is first activated by ATP to form Glu-AMP and then transferred to the acceptor end of tRNA(Glu). In Metallosphaera sedula (strain ATCC 51363 / DSM 5348 / JCM 9185 / NBRC 15509 / TH2), this protein is Glutamate--tRNA ligase.